We begin with the raw amino-acid sequence, 348 residues long: Propane 2-monooxygenase, reductase component (348 aa).

The 91-residue stretch at 5-95 folds into the 2Fe-2S ferredoxin-type domain; that stretch reads HKINFDPVDI…DCTIELLNFD (91 aa). 4 residues coordinate [2Fe-2S] cluster: cysteine 39, cysteine 44, cysteine 47, and cysteine 79. One can recognise an FAD-binding FR-type domain in the interval 105–206; the sequence is IQDVRTQVQA…TGPYGSFTLK (102 aa).

This sequence belongs to the bacterial ring-hydroxylating dioxygenase ferredoxin reductase family. The propane 2-monooxygenase multicomponent enzyme system is composed of an electron transfer component and a monooxygenase component interacting with the effector protein MimD. The electron transfer component is composed of a reductase (MimB), and the monooxygenase component is formed by a large subunit (MimA) and a small subunit (MimC). The cofactor is FAD. [2Fe-2S] cluster is required as a cofactor.

Its function is as follows. Reductase component of the propane 2-monooxygenase multicomponent enzyme system which is involved in the degradation of propane via the O2-dependent hydroxylation of propane. Reductase catalyzes the transfer of electrons from NADH or NADPH to monooxygenase. This Mycolicibacterium smegmatis (strain ATCC 700084 / mc(2)155) (Mycobacterium smegmatis) protein is Propane 2-monooxygenase, reductase component.